The primary structure comprises 178 residues: Large ribosomal subunit protein uL6 (178 aa).

The protein belongs to the universal ribosomal protein uL6 family. In terms of assembly, part of the 50S ribosomal subunit.

Functionally, this protein binds to the 23S rRNA, and is important in its secondary structure. It is located near the subunit interface in the base of the L7/L12 stalk, and near the tRNA binding site of the peptidyltransferase center. The chain is Large ribosomal subunit protein uL6 from Streptococcus pneumoniae (strain JJA).